Here is a 907-residue protein sequence, read N- to C-terminus: MYDQVPYRDTDEATPQIKNDASDSNRSSIDTTSTTSLILERLHREDPDDSPGEYESSGPSQRGKPDEDDDLEIGRAARLKPMERKVRRAMYLLAFLMIGGWFLALAVYVSREHFGTPDTAHDPSATATRKAGKKITLNQVMRGAWRSKTHGIQWINGPHGDQDGLLLTQNSFGDGNFLEVQDVKNDSNTIVLIKDGALQGSGQPVSAIKGWPSSDLKKVLVASDHEKRWRHSYNARYWIYDVEKATTEPLVPSEPEARLSLATWSPKGDAIAFVKDNNVFIRQLGLDLTSEYYSVTQVTKDGGPDLFYGIPDWVYEEEVFSGNSALWWSQDGEFLAFLRTNETEVPEYPIQYFVSRPSGNNPPNGLENYPELEFIKYPKAGAPNPVVHLRFYDLKKKEDFAVTVENDFPDDDRLITEVVWSDGKYLLVRETNRESDVLRMVLIDVSARSGKVVREVDISAIDGGWFEVSKNTRYIPADPASGRPYEGYIDTVIHEGYDHLGYFTPLDNKDPILLTKGQWEVVDAPSAVDLKNGIVYFVATEKSPIERHVYSVKLDGSNFRPVTSTSEDGRYDVSFSKLSGYALLTYEGPGIPWQKVVGTPSGDQSFVKDIEKNQGLATLAAKHELPTFHYSTVNIDGFDLHVVERRPPHFNKKRKYPVLFQVYGGPGSQQVSKSFSIDFQAYIAAGLEYIVVTVDGRGTGFIGRKARVAVRGNLGYWEAHDQIETAKIWGKKGYVDKKRIAIWGWSYGGFMTLKTLEQDAGRTFSYGMAVAPVTDWRFYDSIYTERYMHTPQHNQEGYRNATISDTQALSKSVRFLLMHGVADDNVHMQNSLALLDKLDLASVENYDVHVFPDSDHSIYFHNANRMVYDRLEQWLIRAFNGEFLKLDGLKPIREISEPLRKRNRELV.

The segment covering 1 to 11 has biased composition (basic and acidic residues); sequence MYDQVPYRDTD. The segment at 1 to 71 is disordered; it reads MYDQVPYRDT…RGKPDEDDDL (71 aa). Residues 1 to 88 lie on the Cytoplasmic side of the membrane; sequence MYDQVPYRDT…LKPMERKVRR (88 aa). Positions 22–36 are enriched in low complexity; it reads SDSNRSSIDTTSTTS. A helical; Signal-anchor for type II membrane protein transmembrane segment spans residues 89–109; sequence AMYLLAFLMIGGWFLALAVYV. Topologically, residues 110 to 907 are vacuolar; it reads SREHFGTPDT…PLRKRNRELV (798 aa). N-linked (GlcNAc...) asparagine glycosylation is found at Asn185 and Asn341. Ser746 serves as the catalytic Charge relay system. N-linked (GlcNAc...) asparagine glycosylation occurs at Asn800. Active-site charge relay system residues include Asp823 and His856.

Belongs to the peptidase S9B family.

The protein localises to the vacuole membrane. The catalysed reaction is Release of an N-terminal dipeptide, Xaa-Yaa-|-Zaa-, from a polypeptide, preferentially when Yaa is Pro, provided Zaa is neither Pro nor hydroxyproline.. Its function is as follows. Type IV dipeptidyl-peptidase which removes N-terminal dipeptides sequentially from polypeptides having unsubstituted N-termini provided that the penultimate residue is proline. The chain is Probable dipeptidyl-aminopeptidase B (DAPB) from Tuber melanosporum (strain Mel28) (Perigord black truffle).